The chain runs to 276 residues: Bis(5'-nucleosyl)-tetraphosphatase, symmetrical (276 aa).

The protein belongs to the Ap4A hydrolase family.

The catalysed reaction is P(1),P(4)-bis(5'-adenosyl) tetraphosphate + H2O = 2 ADP + 2 H(+). In terms of biological role, hydrolyzes diadenosine 5',5'''-P1,P4-tetraphosphate to yield ADP. The polypeptide is Bis(5'-nucleosyl)-tetraphosphatase, symmetrical (Legionella pneumophila subsp. pneumophila (strain Philadelphia 1 / ATCC 33152 / DSM 7513)).